A 179-amino-acid chain; its full sequence is Cell division protein SepF (179 aa).

The disordered stretch occupies residues 18 to 57 (EDSTVPYEKGNEPVFTPVNSSQEPDLPMNQPSQSAGAKDS). A compositionally biased stretch (polar residues) spans 34–57 (PVNSSQEPDLPMNQPSQSAGAKDS).

Belongs to the SepF family. As to quaternary structure, homodimer. Interacts with FtsZ.

The protein resides in the cytoplasm. Its function is as follows. Cell division protein that is part of the divisome complex and is recruited early to the Z-ring. Probably stimulates Z-ring formation, perhaps through the cross-linking of FtsZ protofilaments. Its function overlaps with FtsA. The protein is Cell division protein SepF of Streptococcus pneumoniae (strain Hungary19A-6).